The primary structure comprises 510 residues: 3,4-dihydroxyphenylacetaldehyde synthase (510 aa).

Residue asparagine 192 is part of the active site. Lysine 303 bears the N6-(pyridoxal phosphate)lysine mark.

Belongs to the group II decarboxylase family. It depends on pyridoxal 5'-phosphate as a cofactor.

It catalyses the reaction L-dopa + O2 + H2O + H(+) = 3,4-dihydroxyphenylacetaldehyde + H2O2 + NH4(+) + CO2. Its function is as follows. Catalyzes the decarboxylation-oxidative deamination of L-3,4-dihydroxyphenylalanine (L-DOPA) to 3,4-dihydroxylphenylacetaldehyde (DHPAA). Involved in cuticle development. Probably responsible for the protein cross-linking during the development of flexible cuticles. In Drosophila melanogaster (Fruit fly), this protein is 3,4-dihydroxyphenylacetaldehyde synthase (amd).